A 310-amino-acid chain; its full sequence is Malate dehydrogenase (310 aa).

Residues 7–13 and aspartate 34 contribute to the NAD(+) site; that span reads GAAGGIG. Substrate contacts are provided by arginine 81 and arginine 87. NAD(+)-binding positions include asparagine 94 and 117-119; that span reads ITN. 2 residues coordinate substrate: asparagine 119 and arginine 153. The active-site Proton acceptor is the histidine 177. Methionine 227 is an NAD(+) binding site.

The protein belongs to the LDH/MDH superfamily. MDH type 1 family. As to quaternary structure, homodimer.

The enzyme catalyses (S)-malate + NAD(+) = oxaloacetate + NADH + H(+). Catalyzes the reversible oxidation of malate to oxaloacetate. The chain is Malate dehydrogenase from Pseudoalteromonas translucida (strain TAC 125).